We begin with the raw amino-acid sequence, 504 residues long: Deoxyguanosinetriphosphate triphosphohydrolase (504 aa).

The HD domain maps to 66 to 273; that stretch reads RLTHSMEVQQ…MEAADDISYC (208 aa).

The protein belongs to the dGTPase family. Type 1 subfamily. In terms of assembly, homotetramer. It depends on Mg(2+) as a cofactor.

The catalysed reaction is dGTP + H2O = 2'-deoxyguanosine + triphosphate + H(+). In terms of biological role, dGTPase preferentially hydrolyzes dGTP over the other canonical NTPs. This chain is Deoxyguanosinetriphosphate triphosphohydrolase, found in Enterobacter sp. (strain 638).